A 481-amino-acid chain; its full sequence is tRNA-guanine(15) transglycosylase (481 aa).

Residue Asp87 is the Nucleophile of the active site. Residues Asp122 and Ala191 each coordinate substrate. Residues Cys273, Cys275, and Cys278 each coordinate Zn(2+).

This sequence belongs to the archaeosine tRNA-ribosyltransferase family. It depends on Zn(2+) as a cofactor.

It carries out the reaction guanosine(15) in tRNA + 7-cyano-7-deazaguanine = 7-cyano-7-carbaguanosine(15) in tRNA + guanine. It participates in tRNA modification; archaeosine-tRNA biosynthesis. Functionally, exchanges the guanine residue with 7-cyano-7-deazaguanine (preQ0) at position 15 in the dihydrouridine loop (D-loop) of archaeal tRNAs. The protein is tRNA-guanine(15) transglycosylase of Archaeoglobus fulgidus (strain ATCC 49558 / DSM 4304 / JCM 9628 / NBRC 100126 / VC-16).